A 506-amino-acid polypeptide reads, in one-letter code: Cytochrome P450 6a2 (506 aa).

Residue Cys451 coordinates heme.

It belongs to the cytochrome P450 family. Heme serves as cofactor.

Its subcellular location is the endoplasmic reticulum membrane. The protein localises to the microsome membrane. Its function is as follows. Is involved in the breakdown of synthetic insecticides and may be involved in the metabolism of insect hormones. This chain is Cytochrome P450 6a2 (Cyp6a2), found in Drosophila melanogaster (Fruit fly).